We begin with the raw amino-acid sequence, 201 residues long: Imidazole glycerol phosphate synthase subunit HisH (201 aa).

A Glutamine amidotransferase type-1 domain is found at 1-201 (MIIVIDYDAG…ILKKFVDLCD (201 aa)). The Nucleophile role is filled by cysteine 79. Active-site residues include histidine 181 and glutamate 183.

As to quaternary structure, heterodimer of HisH and HisF.

It localises to the cytoplasm. The enzyme catalyses 5-[(5-phospho-1-deoxy-D-ribulos-1-ylimino)methylamino]-1-(5-phospho-beta-D-ribosyl)imidazole-4-carboxamide + L-glutamine = D-erythro-1-(imidazol-4-yl)glycerol 3-phosphate + 5-amino-1-(5-phospho-beta-D-ribosyl)imidazole-4-carboxamide + L-glutamate + H(+). It carries out the reaction L-glutamine + H2O = L-glutamate + NH4(+). Its pathway is amino-acid biosynthesis; L-histidine biosynthesis; L-histidine from 5-phospho-alpha-D-ribose 1-diphosphate: step 5/9. Functionally, IGPS catalyzes the conversion of PRFAR and glutamine to IGP, AICAR and glutamate. The HisH subunit catalyzes the hydrolysis of glutamine to glutamate and ammonia as part of the synthesis of IGP and AICAR. The resulting ammonia molecule is channeled to the active site of HisF. The sequence is that of Imidazole glycerol phosphate synthase subunit HisH from Streptococcus mutans serotype c (strain ATCC 700610 / UA159).